The following is a 209-amino-acid chain: Glycolipid transfer protein (209 aa).

At Ala-2 the chain carries N-acetylalanine. 2 consecutive repeat copies span residues 45 to 55 and 56 to 66. The interval 45–66 is 2 X 12 AA approximate tandem repeats; it reads IKADISGNITKIKAVYDTNPAK. Beta-D-galactosyl-(1-&gt;4)-beta-D-glucosyl-(1&lt;-&gt;1)-N-[(9Z)-octadecenoyl]-sphing-4-enine is bound at residue 48–55; sequence DISGNITK. Positions 140 and 207 each coordinate beta-D-galactosyl-(1-&gt;4)-beta-D-glucosyl-(1&lt;-&gt;1)-N-[(9Z)-octadecenoyl]-sphing-4-enine.

The protein belongs to the GLTP family. As to quaternary structure, monomer. Detected in fibroblasts (at protein level). Detected in fibroblasts and in various cancer cell lines.

The protein resides in the cytoplasm. Its function is as follows. Accelerates the intermembrane transfer of various glycolipids. Catalyzes the transfer of various glycosphingolipids between membranes but does not catalyze the transfer of phospholipids. May be involved in the intracellular translocation of glucosylceramides. The chain is Glycolipid transfer protein (GLTP) from Homo sapiens (Human).